Consider the following 638-residue polypeptide: 1-deoxy-D-xylulose-5-phosphate synthase (638 aa).

Thiamine diphosphate is bound by residues H75 and 116-118; that span reads AHS. D147 contacts Mg(2+). Residues 148–149, N177, Y288, and E370 each bind thiamine diphosphate; that span reads GA. N177 lines the Mg(2+) pocket.

The protein belongs to the transketolase family. DXPS subfamily. Homodimer. It depends on Mg(2+) as a cofactor. Thiamine diphosphate is required as a cofactor.

It catalyses the reaction D-glyceraldehyde 3-phosphate + pyruvate + H(+) = 1-deoxy-D-xylulose 5-phosphate + CO2. It participates in metabolic intermediate biosynthesis; 1-deoxy-D-xylulose 5-phosphate biosynthesis; 1-deoxy-D-xylulose 5-phosphate from D-glyceraldehyde 3-phosphate and pyruvate: step 1/1. In terms of biological role, catalyzes the acyloin condensation reaction between C atoms 2 and 3 of pyruvate and glyceraldehyde 3-phosphate to yield 1-deoxy-D-xylulose-5-phosphate (DXP). In Cupriavidus pinatubonensis (strain JMP 134 / LMG 1197) (Cupriavidus necator (strain JMP 134)), this protein is 1-deoxy-D-xylulose-5-phosphate synthase.